A 155-amino-acid chain; its full sequence is UPF0178 protein TDE_2151 (155 aa).

Belongs to the UPF0178 family.

The protein is UPF0178 protein TDE_2151 of Treponema denticola (strain ATCC 35405 / DSM 14222 / CIP 103919 / JCM 8153 / KCTC 15104).